A 169-amino-acid chain; its full sequence is Peptide methionine sulfoxide reductase MsrA 1 (169 aa).

Cysteine 12 is an active-site residue.

The protein belongs to the MsrA Met sulfoxide reductase family.

It carries out the reaction L-methionyl-[protein] + [thioredoxin]-disulfide + H2O = L-methionyl-(S)-S-oxide-[protein] + [thioredoxin]-dithiol. The catalysed reaction is [thioredoxin]-disulfide + L-methionine + H2O = L-methionine (S)-S-oxide + [thioredoxin]-dithiol. Has an important function as a repair enzyme for proteins that have been inactivated by oxidation. Catalyzes the reversible oxidation-reduction of methionine sulfoxide in proteins to methionine. In Staphylococcus aureus (strain Mu50 / ATCC 700699), this protein is Peptide methionine sulfoxide reductase MsrA 1 (msrA1).